Reading from the N-terminus, the 620-residue chain is Leucine-rich repeat and immunoglobulin-like domain-containing nogo receptor-interacting protein 1 (620 aa).

An N-terminal signal peptide occupies residues 1-41 (MQVSKRMLAGGVRSMPSPLLACWQPILLLVLGSVLSGSATG). Disulfide bonds link Cys42/Cys48 and Cys46/Cys57. The region spanning 42-71 (CPPRCECSAQDRAVLCHRKRFVAVPEGIPT) is the LRRNT domain. At 42–561 (CPPRCECSAQ…FDIKTLIIAT (520 aa)) the chain is on the extracellular side. LRR repeat units follow at residues 72–93 (ETRLLDLGKNRIKTLNQDEFAS), 96–117 (HLEELELNENIVSAVEPGAFNN), 120–141 (NLRTLGLRSNRLKLIPLGVFTG), 144–165 (NLTKLDISENKIVILLDYMFQD), 168–189 (NLKSLEVGDNDLVYISHRAFSG), 192–213 (SLEQLTLEKCNLTSIPTEALSH), 216–237 (GLIVLRLRHLNINAIRDYSFKR), 264–285 (NLTSLSITHCNLTAVPYLAVRH), 288–309 (YLRFLNLSYNPISTIEGSMLHE), 312–333 (RLQEIQLVGGQLAVVEPYAFRG), and 336–357 (YLRVLNVSGNQLTTLEESVFHS). Asn144 carries N-linked (GlcNAc...) asparagine glycosylation. A glycan (N-linked (GlcNAc...) asparagine) is linked at Asn202. N-linked (GlcNAc...) asparagine glycans are attached at residues Asn264, Asn274, and Asn293. Residue Asn341 is glycosylated (N-linked (GlcNAc...) asparagine). One can recognise an LRRCT domain in the interval 369 to 423 (NPLACDCRLLWVFRRRWRLNFNRQQPTCATPEFVQGKEFKDFPDVLLPNYFTCRR). Disulfide bonds link Cys373-Cys396, Cys375-Cys421, and Cys446-Cys497. Positions 411-513 (PDVLLPNYFT…GNDSMPAHLH (103 aa)) constitute an Ig-like C2-type domain. N-linked (GlcNAc...) asparagine glycosylation is found at Asn492, Asn505, Asn526, and Asn542. Residues 562-582 (TMGFISFLGVVLFCLVLLFLW) traverse the membrane as a helical segment. The Cytoplasmic portion of the chain corresponds to 583–620 (SRGKGNTKHNIEIEYVPRKSDAGISSADAPRKFNMKMI). Residue Ser602 is modified to Phosphoserine.

As to quaternary structure, homotetramer. Forms a ternary complex with RTN4R/NGFR and RTN4R/TNFRSF19. Interacts with NGRF and MYT1L. Interacts with RTN4R. N-glycosylated. Contains predominantly high-mannose glycans. In terms of tissue distribution, expressed exclusively in the central nervous system. Highest level in the in amygdala, hippocampus, thalamus and cerebral cortex. In the rest of the brain a basal expression seems to be always present. Up-regulated in substantia nigra neurons from Parkinson disease patients.

Its subcellular location is the cell membrane. Functional component of the Nogo receptor signaling complex (RTN4R/NGFR) in RhoA activation responsible for some inhibition of axonal regeneration by myelin-associated factors. Is also an important negative regulator of oligodentrocyte differentiation and axonal myelination. Acts in conjunction with RTN4 and RTN4R in regulating neuronal precursor cell motility during cortical development. The protein is Leucine-rich repeat and immunoglobulin-like domain-containing nogo receptor-interacting protein 1 (LINGO1) of Homo sapiens (Human).